Consider the following 624-residue polypeptide: Chaperone protein HtpG (624 aa).

The tract at residues 1-336 (MSMKGQETRG…SNDLPLNVSR (336 aa)) is a; substrate-binding. The tract at residues 337 to 552 (EILQDSRVTQ…ADEMSTQMAK (216 aa)) is b. The c stretch occupies residues 553–624 (LFAAAGQQAP…IRRMNQLLTA (72 aa)).

It belongs to the heat shock protein 90 family. As to quaternary structure, homodimer.

The protein resides in the cytoplasm. Molecular chaperone. Has ATPase activity. This is Chaperone protein HtpG from Yersinia enterocolitica serotype O:8 / biotype 1B (strain NCTC 13174 / 8081).